We begin with the raw amino-acid sequence, 472 residues long: WASH complex subunit 1 (472 aa).

A required for WASH complex assembly region spans residues 1–51 (MPQNRSMESQAYSLPLILPDLRREEAIHQITDTLQHLQTVSNDIFSRILQR). Disordered stretches follow at residues 289–365 (ENSR…SDGR), 377–412 (GIGK…GDLM), and 426–472 (ISGK…DWES). Pro residues-rich tracts occupy residues 301-319 (LPPP…PPEP) and 327-336 (SLAPPLPIPA). The interval 352–472 (QGAPKEVVNP…GDGDEEDWES (121 aa)) is VCA. One can recognise a WH2 domain in the interval 364–386 (GRASLLESIRQAGGIGKAKLRNV). A compositionally biased stretch (basic and acidic residues) spans 385 to 401 (NVKEKKLEKKKMKEQEQ).

It belongs to the WASH1 family. In terms of assembly, component of the WASH complex.

It is found in the early endosome membrane. The protein resides in the recycling endosome membrane. Acts as a nucleation-promoting factor at the surface of endosomes, where it recruits and activates the Arp2/3 complex to induce actin polymerization, playing a key role in the fission of tubules that serve as transport intermediates during endosome sorting. The chain is WASH complex subunit 1 from Xenopus tropicalis (Western clawed frog).